Consider the following 634-residue polypeptide: Threonine--tRNA ligase (634 aa).

Positions 1–142 are editing domain; that stretch reads MQLLLIHSDY…LSRSIRPEGA (142 aa). The segment at 214–513 is catalytic; the sequence is PHVELMRRLE…TEEGKVPMLP (300 aa). Residues Cys306, His358, and His482 each contribute to the Zn(2+) site.

This sequence belongs to the class-II aminoacyl-tRNA synthetase family. As to quaternary structure, homodimer. Requires Zn(2+) as cofactor.

The protein resides in the cytoplasm. The catalysed reaction is tRNA(Thr) + L-threonine + ATP = L-threonyl-tRNA(Thr) + AMP + diphosphate + H(+). Functionally, catalyzes the attachment of threonine to tRNA(Thr) in a two-step reaction: L-threonine is first activated by ATP to form Thr-AMP and then transferred to the acceptor end of tRNA(Thr). Edits incorrectly charged L-seryl-tRNA(Thr) probably via its editing domain (tested with total bovine tRNA). Activates L-serine, but does not detectably transfer it to tRNA (tested with total bovine tRNA). The sequence is that of Threonine--tRNA ligase from Methanosarcina mazei (strain ATCC BAA-159 / DSM 3647 / Goe1 / Go1 / JCM 11833 / OCM 88) (Methanosarcina frisia).